Reading from the N-terminus, the 317-residue chain is Cytochrome f (317 aa).

A signal peptide spans 1–31 (MIFKPQSFLKAIVLSMTITFAFNMSAPIASA). Heme-binding residues include Tyr-32, Cys-52, Cys-55, and His-56. Residues 280-302 (PVRIQGLLAFFACILLAQILLVV) traverse the membrane as a helical segment.

The protein belongs to the cytochrome f family. In terms of assembly, the 4 large subunits of the cytochrome b6-f complex are cytochrome b6, subunit IV (17 kDa polypeptide, petD), cytochrome f and the Rieske protein, while the 4 small subunits are PetG, PetL, PetM and PetN. The complex functions as a dimer. The cofactor is heme.

It localises to the plastid. The protein resides in the chloroplast thylakoid membrane. In terms of biological role, component of the cytochrome b6-f complex, which mediates electron transfer between photosystem II (PSII) and photosystem I (PSI), cyclic electron flow around PSI, and state transitions. This chain is Cytochrome f, found in Chlamydomonas subcaudata.